Consider the following 235-residue polypeptide: Ribosomal RNA small subunit methyltransferase G (235 aa).

S-adenosyl-L-methionine contacts are provided by residues G98, M103, 149 to 150, and R164; that span reads VE.

This sequence belongs to the methyltransferase superfamily. RNA methyltransferase RsmG family.

Its subcellular location is the cytoplasm. The catalysed reaction is guanosine(527) in 16S rRNA + S-adenosyl-L-methionine = N(7)-methylguanosine(527) in 16S rRNA + S-adenosyl-L-homocysteine. Specifically methylates the N7 position of guanine in position 527 of 16S rRNA. The polypeptide is Ribosomal RNA small subunit methyltransferase G (Cupriavidus metallidurans (strain ATCC 43123 / DSM 2839 / NBRC 102507 / CH34) (Ralstonia metallidurans)).